The primary structure comprises 78 residues: Toxin OAIP 5 (78 aa).

Positions 1–19 (MLIVILTCALLVIYHAAAA) are cleaved as a signal peptide. Positions 20-40 (EELEAKDVIESKALATLDEER) are excised as a propeptide. 3 disulfides stabilise this stretch: C43–C56, C47–C70, and C64–C75.

This sequence belongs to the neurotoxin 12 (Hwtx-2) family. 05 (OAIP-5) subfamily. As to expression, expressed by the venom gland.

The protein localises to the secreted. In terms of biological role, probable ion channel inhibitor. Shows insecticidal activity when injected into mealworms. This is Toxin OAIP 5 from Selenotypus plumipes (Australian featherleg tarantula).